A 570-amino-acid chain; its full sequence is Auxin efflux carrier component 6 (570 aa).

Residues 1–6 (MITGNE) lie on the Extracellular side of the membrane. The chain crosses the membrane as a helical span at residues 7–27 (FYTVMCAMAPLYFAMFVAYGS). Over 28 to 38 (VKWCKIFTPAQ) the chain is Cytoplasmic. Residues 39–59 (CSGINRFVSVFAVPVLSFHFI) form a helical membrane-spanning segment. Residue Val51 participates in (indol-3-yl)acetate binding. The Extracellular segment spans residues 60 to 70 (SQNNPYKMDTM). Residues 71–91 (FILADTLSKIFVFVLLSLWAV) traverse the membrane as a helical segment. The Cytoplasmic portion of the chain corresponds to 92 to 100 (FFKAGGLDW). The helical transmembrane segment at 101–121 (LITLFSIATLPNTLVMGIPLL) threads the bilayer. Positions 112 and 114 each coordinate (indol-3-yl)acetate. The Extracellular portion of the chain corresponds to 122–131 (QAMYGDYTQT). The chain crosses the membrane as a helical span at residues 132 to 152 (LMVQLVVLQCIIWYTLLLFLF). Residue Tyr145 coordinates (indol-3-yl)acetate. The Cytoplasmic portion of the chain corresponds to 153-430 (ELRAARLLIR…LSRNPNTYSS (278 aa)). 2 positions are modified to phosphoserine: Ser230 and Ser308. Residues 431-451 (LLGLVWSLISFKWNIPMPNIV) traverse the membrane as a helical segment. The Extracellular portion of the chain corresponds to 452 to 454 (DFS). A helical membrane pass occupies residues 455–475 (IKIISDAGLGMAMFSLGLFMA). Over 476–491 (LQPKMIPCGAKKATMG) the chain is Cytoplasmic. Residues 492–512 (MLIRFISGPLFMAGASLLVGL) form a helical membrane-spanning segment. Topologically, residues 513 to 515 (RGS) are extracellular. Residues 516-536 (RLHAAIVQAALPQGIVPFVFA) traverse the membrane as a helical segment. Ile530 and Val531 together coordinate (indol-3-yl)acetate. At 537 to 549 (REYNLHPDLLSTL) the chain is on the cytoplasmic side. The helical transmembrane segment at 550–570 (VIFGMIVSLPVTILYYVLLGL) threads the bilayer.

This sequence belongs to the auxin efflux carrier (TC 2.A.69.1) family. As to quaternary structure, homodimer. As to expression, expressed in the vasculature of the primary root, cotyledons, floral stem, sepals and the main transmitting tract of the reproductive silique. Expressed in embryos, shoot meristem, root tip and lateral root meristems. Expressed in the nectaries and the floral organ boundaries of the anthers. Detected in pollen. Expressed in broad subepidermal domains that narrowed to sites of vein formation. Expressed in veins of mature leaves.

It is found in the endoplasmic reticulum membrane. Component of the intracellular auxin-transport pathway. Regulates auxin transport and auxin homeostasis. Directly involved in the regulation of nectar production. Involved in unfolded protein response (UPR) activation. Involved in the control of vein patterning. Redundantly with PIN8, inhibits the vein-formation-promoting functions of PIN5. PIN5, PIN6, and PIN8 control vein network geometry, but they are expressed in mutually exclusive domains of leaf vascular cells. The sequence is that of Auxin efflux carrier component 6 from Arabidopsis thaliana (Mouse-ear cress).